We begin with the raw amino-acid sequence, 179 residues long: Acireductone dioxygenase (179 aa).

Residues His88, His90, Glu94, and His133 each contribute to the Fe(2+) site. Residues His88, His90, Glu94, and His133 each coordinate Ni(2+).

The protein belongs to the acireductone dioxygenase (ARD) family. As to quaternary structure, monomer. Interacts with MMP14. Fe(2+) serves as cofactor. The cofactor is Ni(2+).

Its subcellular location is the cytoplasm. It localises to the nucleus. The protein resides in the cell membrane. It carries out the reaction 1,2-dihydroxy-5-(methylsulfanyl)pent-1-en-3-one + O2 = 4-methylsulfanyl-2-oxobutanoate + formate + 2 H(+). The catalysed reaction is 1,2-dihydroxy-5-(methylsulfanyl)pent-1-en-3-one + O2 = 3-(methylsulfanyl)propanoate + CO + formate + 2 H(+). The protein operates within amino-acid biosynthesis; L-methionine biosynthesis via salvage pathway; L-methionine from S-methyl-5-thio-alpha-D-ribose 1-phosphate: step 5/6. In terms of biological role, catalyzes 2 different reactions between oxygen and the acireductone 1,2-dihydroxy-3-keto-5-methylthiopentene (DHK-MTPene) depending upon the metal bound in the active site. Fe-containing acireductone dioxygenase (Fe-ARD) produces formate and 2-keto-4-methylthiobutyrate (KMTB), the alpha-ketoacid precursor of methionine in the methionine recycle pathway. Ni-containing acireductone dioxygenase (Ni-ARD) produces methylthiopropionate, carbon monoxide and formate, and does not lie on the methionine recycle pathway. Also down-regulates cell migration mediated by MMP14. This is Acireductone dioxygenase from Macaca mulatta (Rhesus macaque).